Reading from the N-terminus, the 454-residue chain is Neuronal acetylcholine receptor subunit alpha-5 (454 aa).

A disordered region spans residues 1 to 26 (MPLRARSRKPGAGPAARAPQAGVSEP). An N-terminal signal peptide occupies residues 1–29 (MPLRARSRKPGAGPAARAPQAGVSEPSFV). Residues 10–22 (PGAGPAARAPQAG) show a composition bias toward low complexity. Residues 30-240 (AKSEDRLFKH…IIRRLPLFYT (211 aa)) are Extracellular-facing. Residues Asn55, Asn169, and Asn215 are each glycosylated (N-linked (GlcNAc...) asparagine). Cys156 and Cys170 are joined by a disulfide. A disulfide bridge links Cys220 with Cys221. The next 3 membrane-spanning stretches (helical) occupy residues 241–261 (LFLIIPCIGLSFLTVLVFYLP), 270–290 (LCTSVLVSLTVFLLVIEEIIP), and 303–323 (LVFTMIFVTLSIVITVFAINI). Over 324 to 416 (HHRSSSTHNA…KFIAQVLDRM (93 aa)) the chain is Cytoplasmic. The chain crosses the membrane as a helical span at residues 417–437 (FLWAFLLVSIIGSLVLFIPVI). At 438-454 (HKWASIIVPVHIGSTNT) the chain is on the extracellular side.

This sequence belongs to the ligand-gated ion channel (TC 1.A.9) family. Acetylcholine receptor (TC 1.A.9.1) subfamily. Alpha-5/CHRNA5 sub-subfamily. In terms of assembly, neuronal AChR that forms heteropentamers composed of two different type of subunits: alpha and non-alpha (beta). CHRNA5/alpha-5 subunit is only able to form functional nAChRs when co-assembled with another alpha subunit, can be combined to CHRNA4/alpha-4 or CHRNA3/alpha-3 and CHRNB4/beta-4 or CHRNB2/beta-2 to give rise to functional receptors. Interacts with LYPD6.

Its subcellular location is the synaptic cell membrane. It localises to the cell membrane. It catalyses the reaction Ca(2+)(in) = Ca(2+)(out). The enzyme catalyses K(+)(in) = K(+)(out). The catalysed reaction is Na(+)(in) = Na(+)(out). Its activity is regulated as follows. Activated by a myriad of ligands such as acetylcholine, cytisine, nicotine, choline and epibatidine. In terms of biological role, component of neuronal acetylcholine receptors (nAChRs) that function as pentameric, ligand-gated cation channels with high calcium permeability among other activities. nAChRs are excitatory neurotrasnmitter receptors formed by a collection of nAChR subunits known to mediate synaptic transmission in the nervous system and the neuromuscular junction. Each nAchR subunit confers differential attributes to channel properties, including activation, deactivation and desensitization kinetics, pH sensitivity, cation permeability, and binding to allosteric modulators. Has an accessory rather than functional role and is only able to form functional nAChRs when co-assembled with another beta subunit. Participates in pentameric assemblies along with CHRNA3, CHRNA4, CHRNB2 and CHRNB4. Increases receptor sensitivity to acetylcholine and nicotine when associated with CHRNA4 and CHRNB2. Plays a role in nicotine addiction. In Gallus gallus (Chicken), this protein is Neuronal acetylcholine receptor subunit alpha-5 (CHRNA5).